A 428-amino-acid chain; its full sequence is Glucose-1-phosphate adenylyltransferase (428 aa).

Residues Y99, G164, 179-180, and S190 contribute to the alpha-D-glucose 1-phosphate site; that span reads EK.

This sequence belongs to the bacterial/plant glucose-1-phosphate adenylyltransferase family. As to quaternary structure, homotetramer.

It catalyses the reaction alpha-D-glucose 1-phosphate + ATP + H(+) = ADP-alpha-D-glucose + diphosphate. It participates in glycan biosynthesis; glycogen biosynthesis. Its function is as follows. Involved in the biosynthesis of ADP-glucose, a building block required for the elongation reactions to produce glycogen. Catalyzes the reaction between ATP and alpha-D-glucose 1-phosphate (G1P) to produce pyrophosphate and ADP-Glc. This is Glucose-1-phosphate adenylyltransferase from Thermomicrobium roseum (strain ATCC 27502 / DSM 5159 / P-2).